A 268-amino-acid chain; its full sequence is Hydroxyethylthiazole kinase (268 aa).

Met45 lines the substrate pocket. The ATP site is built by Arg121 and Thr167. Substrate is bound at residue Gly194.

Belongs to the Thz kinase family. Mg(2+) is required as a cofactor.

The catalysed reaction is 5-(2-hydroxyethyl)-4-methylthiazole + ATP = 4-methyl-5-(2-phosphooxyethyl)-thiazole + ADP + H(+). It participates in cofactor biosynthesis; thiamine diphosphate biosynthesis; 4-methyl-5-(2-phosphoethyl)-thiazole from 5-(2-hydroxyethyl)-4-methylthiazole: step 1/1. Functionally, catalyzes the phosphorylation of the hydroxyl group of 4-methyl-5-beta-hydroxyethylthiazole (THZ). This is Hydroxyethylthiazole kinase from Bacillus thuringiensis subsp. konkukian (strain 97-27).